The chain runs to 86 residues: Small ribosomal subunit protein bS16 (86 aa).

This sequence belongs to the bacterial ribosomal protein bS16 family.

The polypeptide is Small ribosomal subunit protein bS16 (Xanthomonas campestris pv. campestris (strain 8004)).